Here is a 75-residue protein sequence, read N- to C-terminus: UPF0154 protein MMOB4450 (75 aa).

A helical membrane pass occupies residues Ile7–Phe27.

This sequence belongs to the UPF0154 family.

Its subcellular location is the cell membrane. This chain is UPF0154 protein MMOB4450, found in Mycoplasma mobile (strain ATCC 43663 / 163K / NCTC 11711) (Mesomycoplasma mobile).